Consider the following 293-residue polypeptide: Pantothenate synthetase (293 aa).

38-45 lines the ATP pocket; the sequence is MGALHEGH. The Proton donor role is filled by H45. (R)-pantoate is bound at residue Q69. Residue Q69 coordinates beta-alanine. ATP is bound at residue 155–158; sequence GEKD. Q161 serves as a coordination point for (R)-pantoate. 192–195 lines the ATP pocket; sequence QSSR.

This sequence belongs to the pantothenate synthetase family. In terms of assembly, homodimer.

It is found in the cytoplasm. The catalysed reaction is (R)-pantoate + beta-alanine + ATP = (R)-pantothenate + AMP + diphosphate + H(+). The protein operates within cofactor biosynthesis; (R)-pantothenate biosynthesis; (R)-pantothenate from (R)-pantoate and beta-alanine: step 1/1. Functionally, catalyzes the condensation of pantoate with beta-alanine in an ATP-dependent reaction via a pantoyl-adenylate intermediate. The chain is Pantothenate synthetase from Hyphomonas neptunium (strain ATCC 15444).